The chain runs to 349 residues: Anthranilate phosphoribosyltransferase (349 aa).

Residues G82, 85 to 86 (GD), 92 to 95 (NVST), 110 to 118 (KHGNRAVSG), and S122 contribute to the 5-phospho-alpha-D-ribose 1-diphosphate site. G82 is an anthranilate binding site. S94 provides a ligand contact to Mg(2+). Anthranilate is bound at residue N113. R168 provides a ligand contact to anthranilate. Positions 227 and 228 each coordinate Mg(2+).

Belongs to the anthranilate phosphoribosyltransferase family. As to quaternary structure, homodimer. It depends on Mg(2+) as a cofactor.

The enzyme catalyses N-(5-phospho-beta-D-ribosyl)anthranilate + diphosphate = 5-phospho-alpha-D-ribose 1-diphosphate + anthranilate. It functions in the pathway amino-acid biosynthesis; L-tryptophan biosynthesis; L-tryptophan from chorismate: step 2/5. In terms of biological role, catalyzes the transfer of the phosphoribosyl group of 5-phosphorylribose-1-pyrophosphate (PRPP) to anthranilate to yield N-(5'-phosphoribosyl)-anthranilate (PRA). In Pseudomonas fluorescens (strain ATCC BAA-477 / NRRL B-23932 / Pf-5), this protein is Anthranilate phosphoribosyltransferase.